We begin with the raw amino-acid sequence, 1054 residues long: MIPVVYSNLCPVCGGDLESKEIEKHVCFRKKRSLCLFPEDFLLKEFVEFFRKCVGEPRAIQKMWAKRILRKESFAATAPTGVGKTSFGLAMSLFLALKGKRCYVIFPTSLLVIQAAETIRKYAEKAGVGTENLIGYYHGRIPKREKENFMQNLRNFKIVITTTQFLSKHYRELGHFDFIFVDDVDAILKASKNVDKLLHLLGFHYDLKTKSWVGEARGCLMVSTATAKKGKKAELFRQLLNFDIGSSRITVRNVEDVAVNDESISTLSSILEKLGTGGIIYARTGEEAEEIYESLKNKFRIGIVTATKKGDYEKFVEGEIDHLIGTAHYYGTLVRGLDLPERIRFAVFVGCPSFRVTIEDIDSLSPQMVKLLAYLYRNVDEIERLLPAVERHIDEVREILKKVMGKERPQAKDVVVREGEVIFPDLRTYIQGSGRTSRLFAGGLTKGASFLLEDDSELLSAFIERAKLYDIEFKSIDEVDFEKLSRELDESRDRYRRRQEFDLIKPALFIVESPTKARQISRFFGKPSVKVLDGAVVYEIPMQKYVLMVTASIGHVVDLITNRGFHGVLVNGRFVPVYASIKRCRDCGYQFTEDRESCPKCGSENVDNSRSRIEALRKLAHDAEFVIVGTDPDTEGEKIAWDLKNLLSGCGAVKRAEFHEVTRRAILEALESLRDVDENLVKAQVVRRIEDRWIGFVLSQKLWERFNNRNLSAGRAQTPVLGWIIDRFQESRERRKIAIVRDFDLVLEHDEEEFDLTIKLVEEREELRTPLPPYTTETMLSDANRILKFSVKQTMQIAQELFENGLITYHRTDSTRVSDVGQRIAKEYLGDDFVGREWGESGAHECIRPTRPLTRDDVQRLIQEGVLVVEGLRWEHFALYDLIFRRFMASQCRPFKVVVKKYSIEFDGKTAEEERIVRAEGRAYELYRAVWVKNELPTGTFRVKAEVKSVPKVLPFTQSEIIQMMKERGIGRPSTYATIVDRLFMRNYVVEKYGRMIPTKLGIDVFRFLVRRYAKFVSEDRTRDLESRMDAIERGELDYLKALEDLYAEIKSID.

Residues 1-43 (MIPVVYSNLCPVCGGDLESKEIEKHVCFRKKRSLCLFPEDFLL) form an RG N-terminal-type zinc finger. Cysteine 10, cysteine 13, cysteine 27, and cysteine 35 together coordinate Zn(2+). The cysteines at positions 35 and 650 are disulfide-linked. ATP is bound by residues glutamine 61, lysine 84, threonine 85, and serine 86. Residues 65–245 (AKRILRKESF…FRQLLNFDIG (181 aa)) form the Helicase ATP-binding domain. The short motif at 182–185 (DDVD) is the DEAD box element. The interval 352–427 (PSFRVTIEDI…EGEVIFPDLR (76 aa)) is latch region. The topoisomerase I stretch occupies residues 502-1054 (DLIKPALFIV…DLYAEIKSID (553 aa)). The Toprim domain occupies 506–662 (PALFIVESPT…VKRAEFHEVT (157 aa)). Glutamate 512 provides a ligand contact to Mg(2+). The segment at 581–609 (IKRCRDCGYQFTEDRESCPKCGSENVDNS) adopts an RG C-terminal-type zinc-finger fold. Residues cysteine 584, cysteine 587, cysteine 598, and cysteine 601 each contribute to the Zn(2+) site. Mg(2+) is bound at residue aspartate 631. The 378-residue stretch at 677-1054 (DENLVKAQVV…DLYAEIKSID (378 aa)) folds into the Topo IA-type catalytic domain. Tyrosine 809 functions as the O-(5'-phospho-DNA)-tyrosine intermediate in the catalytic mechanism.

This sequence in the N-terminal section; belongs to the DEAD box helicase family. DDVD subfamily. It in the C-terminal section; belongs to the type IA topoisomerase family. In terms of assembly, monomer. It depends on Zn(2+) as a cofactor. The cofactor is Mg(2+).

It is found in the cytoplasm. The catalysed reaction is ATP + H2O = ADP + phosphate + H(+). Its function is as follows. Modifies the topological state of DNA by introducing positive supercoils in an ATP-dependent process, increasing the linking number in steps of +1. Very efficient supercoiling occurs on relaxed DNA with a single-stranded bubble; the minimal bubble is 20 nucleotides (nt) and up to 10 positive supercoils can be introduced into a 3.1 kb plasmid with a 50 nt bubble. Positively supercoils DNA with all (d)NTPS, although it requires about 10-fold more of non-(d)ATP. In the absence of ATP (or at low levels of enzyme), or in the presence of ADP, relaxes negative supercoils. Only relaxes positive supercoils when the substrate contains a bubble. Also promotes strand annealing of complementary ssDNA circles. Binds to single-stranded DNA, transiently cleaves and then rejoins the ends, introducing a positive supercoil in the process. The scissile phosphodiester is attacked by the catalytic tyrosine of the enzyme, resulting in the formation of a DNA-(5'-phosphotyrosyl)-enzyme intermediate. Probably involved in rewinding DNA strands in regions of the chromosome that have opened up to allow replication, transcription, DNA repair and/or for DNA protection. In vitro protects DNA against degradation at 90 degrees Celsius, reducing dsDNA breakage about 8-fold; ATP hydrolysis is not necessary, while ADP decreases the protection somewhat. Coats all forms of dsDNA; the DNA is protected against cleavage and transcription. Recognizes nicked DNA and forms a coat at the nicking site, which may help hold DNA in a structure amenable to repair. The sequence is that of Reverse gyrase from Archaeoglobus fulgidus (strain ATCC 49558 / DSM 4304 / JCM 9628 / NBRC 100126 / VC-16).